We begin with the raw amino-acid sequence, 250 residues long: tRNA (guanine-N(1)-)-methyltransferase (250 aa).

S-adenosyl-L-methionine is bound by residues glycine 116 and 136 to 141 (IGDYVL).

The protein belongs to the RNA methyltransferase TrmD family. Homodimer.

It is found in the cytoplasm. It carries out the reaction guanosine(37) in tRNA + S-adenosyl-L-methionine = N(1)-methylguanosine(37) in tRNA + S-adenosyl-L-homocysteine + H(+). In terms of biological role, specifically methylates guanosine-37 in various tRNAs. The chain is tRNA (guanine-N(1)-)-methyltransferase from Pseudomonas entomophila (strain L48).